The primary structure comprises 1466 residues: MSDESASGSDPDLDPDVELEDEEEEEEEEEVAVEEHDRDDEEGLLDDTSLEGMCGTEHAQLGEDGQRPPRCTSTTSSQSEPSEQLRHQGKILASEDPKKKRAQKPSHMRRNIRKLLREDQLEPVTKAAQQEELERRKRLEQQRKEYAAPIPTVPLEFLPEEIVLRASDGPQLPPRVLAQEVICLDSSSGSEDEKSSRDEVIELSSGEEDTLHIVDSSESVSEEDEEEEKGGTHVNDALNQHDALGRVLVNLNHPPEEENVFLAPQLARAVKPHQIGGIRFLYDNLVESLERFKTSSGFGCILAHSMGLGKTLQVISFIDVLFRHTPAKTVLAIVPVNTLQNWLAEFNMWLPAPEALPADSKPEEVQPRFFKVHILNDEHKTVASRAKVTADWVSEGGVLLMGYEMYRLLTLKKSLATSRPKKTKKRSHPVIIDLDEEDRQQEFRREFEKALCRPGPDVVICDEGHRIKNCQASTSQALKNIRSRRRVVLTGYPLQNNLIEYWCMVDFVRPDFLGTRQEFSNMFERPILNGQCIDSTPQDVRLMRYRSHVLHSLLEGFVQRRGHTVLKIHLPAKEENVILVRLSQIQRDLYTQFMDRFRDCGTSGWLGLNPLKAFCVCCKIWNHPDVLYEALQKENLANEQDLDVEELGSAGTSARCPPHGTKVKGEDSALPSSMGEATNSKFLQGVGFNPFQERGNNIVTYEWAKELLTNYQTGVLENSPKMVLLFHLIEESVKLGDKILVFSQSLSTLALIEEFLGKRDMPCLPGAEGQGTQKWVRNVSYFRLDGSTPAFERERLINQFNDPSNLTTWLFLLSTRAGCLGVNLIGANRVVVFDASWNPCHDAQAVCRVYRYGQKKPCHIYRLVADYTLEKKIYDRQISKQGMSDRVVDDLNPMLNFTRKEVENLLHFVEKEPAPQTSLDIKGIKESVLQLACLKYPHLITKEPFEHESLLLNRKDHKLTKAEKKAAKKSYEEDKRTSVPYTRPSYAQYYPASDQSLTSIPAFSQRNWQPTLKGDEKPVASVRPVQSTPIPMMPRHVPLSGGVSSASSTNTSMNFPINYLQRAGVLVQKVVTTTDIVIPGLNSSTDVQARINAGESIHIIRGTKGTYIRTSDGRIFAVRATGKPKAPEDGRMAASGSQGPSLASTSNGRHSASSPKAPDPEGLARPVSPDSPEIISELQQYADVAAARESRQSSPSISAALPGPPGQLMDNSTIPGTALGTEPCLGGHCLNSSLLVTGQPSGGRHPVLDLRGHKRKLATPSVTQESIRRRSRKGHLPAPVQPYEHGYPVSGGFAMPPVSLNHNLTTPFTSQAGENSLFMGSNPSYYQLSNLLADARLVFPVTTDPLVPAGPVSSSSTATSVTASNPSFMLNPSVPGMLPSYSLPFSQPLLSEPRMFAPFPSPGLPSNLSRGVSVYPGYMSPHAGYPAGGLLRSQVPPFDSHEVAEVGFSSNDDEDKDDDVIEVTGK.

2 disordered regions span residues 1–137 (MSDE…ERRK) and 185–235 (DSSS…THVN). Over residues 11-49 (PDLDPDVELEDEEEEEEEEEVAVEEHDRDDEEGLLDDTS) the composition is skewed to acidic residues. Residues 72-82 (TSTTSSQSEPS) are compositionally biased toward low complexity. Residues 99 to 114 (KKRAQKPSHMRRNIRK) show a composition bias toward basic residues. Glycyl lysine isopeptide (Lys-Gly) (interchain with G-Cter in SUMO2) cross-links involve residues lysine 114 and lysine 126. Residues 191-200 (EDEKSSRDEV) show a composition bias toward basic and acidic residues. Lysine 271 is covalently cross-linked (Glycyl lysine isopeptide (Lys-Gly) (interchain with G-Cter in SUMO2)). A Helicase ATP-binding domain is found at 291–511 (RFKTSSGFGC…WCMVDFVRPD (221 aa)). 304-311 (HSMGLGKT) serves as a coordination point for ATP. Residues 462–465 (DEGH) carry the DEAH box motif. Positions 550–554 (LHSLL) match the LXXLL motif 1 motif. Positions 649 to 670 (SAGTSARCPPHGTKVKGEDSAL) are disordered. Residues lysine 664, lysine 681, lysine 758, lysine 900, lysine 1013, and lysine 1017 each participate in a glycyl lysine isopeptide (Lys-Gly) (interchain with G-Cter in SUMO2) cross-link. The region spanning 727–895 (HLIEESVKLG…RVVDDLNPML (169 aa)) is the Helicase C-terminal domain. 2 disordered regions span residues 1026–1045 (QSTP…GVSS) and 1120–1170 (ATGK…VSPD). Residues 1135-1154 (SGSQGPSLASTSNGRHSASS) show a composition bias toward polar residues. Residues serine 1168 and serine 1171 each carry the phosphoserine modification. Disordered stretches follow at residues 1184–1212 (VAAA…MDNS) and 1259–1281 (TPSV…APVQ). Threonine 1259 is modified (phosphothreonine). The LXXLL motif 2 motif lies at 1328–1332 (LSNLL). The disordered stretch occupies residues 1444–1466 (AEVGFSSNDDEDKDDDVIEVTGK). A compositionally biased stretch (acidic residues) spans 1451-1466 (NDDEDKDDDVIEVTGK).

Belongs to the SNF2/RAD54 helicase family. As to quaternary structure, interacts with AR via its N-terminus. Interacts with DYRK1A. Binds DNA and mononucleosomes, but does not seem to form large multiprotein complexes. Sumoylated. Expressed at relatively low level, with highest expression in testis, liver and kidney. In brain, it is expressed in hippocampal and cerebellar neurons. In testis, it is present at high level in Sertoli cell nuclei. Also present in Leydig cell (at protein level).

Its subcellular location is the nucleus. It carries out the reaction ATP + H2O = ADP + phosphate + H(+). Its activity is regulated as follows. Enzyme activity is enhanced by dsDNA (double-stranded DNA) and ssDNA (single-stranded DNA). In terms of biological role, DNA helicase that modulates androgen receptor (AR)-dependent transactivation in a promoter-dependent manner. Not able to remodel mononucleosomes in vitro. Acts as an AR-coregulator in Sertoli cells. In Mus musculus (Mouse), this protein is Helicase ARIP4 (Rad54l2).